The chain runs to 459 residues: Ribosomal protein uS12 methylthiotransferase RimO (459 aa).

A disordered region spans residues 1–28 (MSTNPPDLRPDLAPKARLTQPDRPGQPT). The 111-residue stretch at 27–137 (PTIGMVSLGC…VLDAVHAAVP (111 aa)) folds into the MTTase N-terminal domain. 6 residues coordinate [4Fe-4S] cluster: cysteine 36, cysteine 72, cysteine 101, cysteine 168, cysteine 172, and cysteine 175. Residues 154 to 387 (LTPRHFSYLK…MAKSQDISEA (234 aa)) enclose the Radical SAM core domain. Positions 390-457 (AAKVAQRLEV…EYDLWGRLAP (68 aa)) constitute a TRAM domain.

This sequence belongs to the methylthiotransferase family. RimO subfamily. [4Fe-4S] cluster serves as cofactor.

Its subcellular location is the cytoplasm. It carries out the reaction L-aspartate(89)-[ribosomal protein uS12]-hydrogen + (sulfur carrier)-SH + AH2 + 2 S-adenosyl-L-methionine = 3-methylsulfanyl-L-aspartate(89)-[ribosomal protein uS12]-hydrogen + (sulfur carrier)-H + 5'-deoxyadenosine + L-methionine + A + S-adenosyl-L-homocysteine + 2 H(+). Catalyzes the methylthiolation of an aspartic acid residue of ribosomal protein uS12. The polypeptide is Ribosomal protein uS12 methylthiotransferase RimO (Roseobacter denitrificans (strain ATCC 33942 / OCh 114) (Erythrobacter sp. (strain OCh 114))).